A 355-amino-acid polypeptide reads, in one-letter code: 3-dehydroquinate synthase (355 aa).

NAD(+) is bound by residues 69 to 74 (DGEQHK), 103 to 107 (GVIGD), 127 to 128 (TT), K140, K149, and 167 to 170 (TLQT). Zn(2+) is bound by residues E182, H245, and H262.

The protein belongs to the sugar phosphate cyclases superfamily. Dehydroquinate synthase family. The cofactor is Co(2+). Zn(2+) is required as a cofactor. NAD(+) serves as cofactor.

Its subcellular location is the cytoplasm. It carries out the reaction 7-phospho-2-dehydro-3-deoxy-D-arabino-heptonate = 3-dehydroquinate + phosphate. The protein operates within metabolic intermediate biosynthesis; chorismate biosynthesis; chorismate from D-erythrose 4-phosphate and phosphoenolpyruvate: step 2/7. Its function is as follows. Catalyzes the conversion of 3-deoxy-D-arabino-heptulosonate 7-phosphate (DAHP) to dehydroquinate (DHQ). The protein is 3-dehydroquinate synthase of Pseudoalteromonas atlantica (strain T6c / ATCC BAA-1087).